The sequence spans 225 residues: Transmembrane protein C16orf54 homolog (225 aa).

The helical transmembrane segment at 32 to 52 threads the bilayer; sequence PCIPIMLGLASLTAFFIITTA. Disordered regions lie at residues 106–163 and 178–200; these read DRAP…ERPH and EAGL…EPDW. A phosphothreonine mark is found at threonine 113 and threonine 117. Low complexity predominate over residues 122–140; sequence ATAPPATSAPYSSLSSLVP. A Phosphoserine modification is found at serine 195.

It is found in the membrane. The chain is Transmembrane protein C16orf54 homolog from Mus musculus (Mouse).